We begin with the raw amino-acid sequence, 168 residues long: Mesencephalic astrocyte-derived neurotrophic factor homolog (168 aa).

The N-terminal stretch at 1–17 (MSRLVLLISLVIVVASA) is a signal peptide. Cystine bridges form between C22-C109, C25-C97, C55-C66, and C143-C146.

The protein belongs to the ARMET family. Expressed in the intestine, spermatheca and nervous system. Expressed in the hypoderm. Expressed in structures of the excretory system. Not expressed in the male gonad.

Its subcellular location is the secreted. It localises to the endoplasmic reticulum lumen. Its function is as follows. Inhibits endoplasmic reticulum (ER) stress response. Retained in the ER under normal conditions and is up-regulated and secreted by the ER in response to ER stress and hypoxia. Following secretion by the ER, directly binds to 3-O-sulfogalactosylceramide, a lipid sulfatide in the outer cell membrane of target cells. Sulfatide binding promotes its cellular uptake by endocytosis, and is required for its role in alleviating ER stress under ER stress conditions. Has a neuroprotective role, ensuring survival of dopaminergic neurons during normal growth. The chain is Mesencephalic astrocyte-derived neurotrophic factor homolog from Caenorhabditis elegans.